A 404-amino-acid chain; its full sequence is Phosphopentomutase (404 aa).

6 residues coordinate Mn(2+): aspartate 10, aspartate 303, histidine 308, aspartate 344, histidine 345, and histidine 356.

Belongs to the phosphopentomutase family. The cofactor is Mn(2+).

Its subcellular location is the cytoplasm. It carries out the reaction 2-deoxy-alpha-D-ribose 1-phosphate = 2-deoxy-D-ribose 5-phosphate. The catalysed reaction is alpha-D-ribose 1-phosphate = D-ribose 5-phosphate. Its pathway is carbohydrate degradation; 2-deoxy-D-ribose 1-phosphate degradation; D-glyceraldehyde 3-phosphate and acetaldehyde from 2-deoxy-alpha-D-ribose 1-phosphate: step 1/2. In terms of biological role, isomerase that catalyzes the conversion of deoxy-ribose 1-phosphate (dRib-1-P) and ribose 1-phosphate (Rib-1-P) to deoxy-ribose 5-phosphate (dRib-5-P) and ribose 5-phosphate (Rib-5-P), respectively. In Shewanella baltica (strain OS223), this protein is Phosphopentomutase.